The primary structure comprises 1238 residues: Kinesin-related protein 10 (1238 aa).

The region spanning 16–374 is the Kinesin motor domain; it reads SMIVTVRIRP…LKYAQRAKSI (359 aa). 116 to 123 lines the ATP pocket; the sequence is GASGAGKT. The span at 417–436 shows a compositional bias: low complexity; that stretch reads NNNNSNNNNNNNNNNYFSNS. The interval 417-503 is disordered; it reads NNNNSNNNNN…DGEDSNNRDN (87 aa). The segment covering 437–464 has biased composition (polar residues); sequence FGSCGNKNQPIKQPTPPTSLFHQQNQKY. A compositionally biased stretch (acidic residues) spans 468–497; the sequence is DDDDDDDNDQEENNDEVLINEDDEEVDGED. Residues 527 to 602 are a coiled coil; that stretch reads TLKKTQSIQR…NNQWRRKLQS (76 aa). 3 stretches are compositionally biased toward low complexity: residues 726–795, 918–934, and 961–971; these read NDIN…NIIN, LLPSTTTATTTTLSSPL, and NNNNNNNNIAP. Disordered stretches follow at residues 726-802, 891-971, 1134-1156, and 1191-1238; these read NDIN…LKPR, EIDD…NIAP, TPTSTISSSISTRPITTSTTTST, and ATLT…KIIK. Positions 1191–1203 are enriched in polar residues; that stretch reads ATLTPNRNNSQIV. Positions 1215 to 1228 are enriched in low complexity; the sequence is PTSSSSRLLPSSRT. Residues 1229-1238 are compositionally biased toward polar residues; the sequence is TVNTSRKIIK.

It belongs to the TRAFAC class myosin-kinesin ATPase superfamily. Kinesin family.

The protein localises to the cytoplasm. It is found in the cytoskeleton. In terms of biological role, microtubule-associated force-producing protein that plays a role in organelle transport. Its motor activity is directed toward the microtubule's plus end. Cooperates with kif8 and dynein to organize interphase microtubules. This is Kinesin-related protein 10 (kif10) from Dictyostelium discoideum (Social amoeba).